Reading from the N-terminus, the 420-residue chain is Gamma-glutamyl phosphate reductase 2 (420 aa).

This sequence belongs to the gamma-glutamyl phosphate reductase family.

The protein localises to the cytoplasm. It catalyses the reaction L-glutamate 5-semialdehyde + phosphate + NADP(+) = L-glutamyl 5-phosphate + NADPH + H(+). The protein operates within amino-acid biosynthesis; L-proline biosynthesis; L-glutamate 5-semialdehyde from L-glutamate: step 2/2. Catalyzes the NADPH-dependent reduction of L-glutamate 5-phosphate into L-glutamate 5-semialdehyde and phosphate. The product spontaneously undergoes cyclization to form 1-pyrroline-5-carboxylate. This is Gamma-glutamyl phosphate reductase 2 from Synechocystis sp. (strain ATCC 27184 / PCC 6803 / Kazusa).